The primary structure comprises 302 residues: KYLEVLDFNHIDGCCESVSLQSGKEAVENLDTGKDSKKDTSGKGDKPQNSQTGQGSKEQTKIGTVSKDVNVGSKGKEVPRLQKITKKMNLPTVGGKIILSLDHLLEYKPNQVDLFNTRATKTEFESWYSAVKIEYDLNDEQMGVIMNGFMVWCIDNGTSPDVNGVWVMMDGEEQVEYPLKPIVENAKPTLRQIMHHFSDAAEAYIEMRNSESPYMPRYGLLRNLRDRELARYAFDFYEVTSKTPNRAREAIAQMKAAALAGINSRLFGLDGNISTNSENTERHTARDVNQNMHTLLGMGPPQ.

Residues 28–46 (ENLDTGKDSKKDTSGKGDK) show a composition bias toward basic and acidic residues. The tract at residues 28–72 (ENLDTGKDSKKDTSGKGDKPQNSQTGQGSKEQTKIGTVSKDVNVG) is disordered. Polar residues predominate over residues 47-63 (PQNSQTGQGSKEQTKIG).

The protein belongs to the potyviridae genome polyprotein family. In terms of processing, genome polyprotein of potyviruses undergoes post-translational proteolytic processing by the main proteinase NIa-pro resulting in the production of at least ten individual proteins. The P1 proteinase and the HC-pro cleave only their respective C-termini autocatalytically. 6K1 is essential for proper proteolytic separation of P3 from CI.

It is found in the virion. It catalyses the reaction RNA(n) + a ribonucleoside 5'-triphosphate = RNA(n+1) + diphosphate. In terms of biological role, an RNA-dependent RNA polymerase that plays an essential role in the virus replication. Involved in aphid transmission, cell-to-cell and systemis movement, encapsidation of the viral RNA and in the regulation of viral RNA amplification. The chain is Genome polyprotein from Watermelon mosaic virus II (isolate Australia).